Reading from the N-terminus, the 391-residue chain is MSIVRMTDLDLSGKRVLIRQDLNVPIDNGQITSEQRITASVPTIKLALEKGAAVMVTSHLGRPKEGSWTEEDSLAPVATRLAALLGVDVPLVRDWVDGVDVAPGQVVLLENCRMNVGEGKDDETLARKYAALCDVFVMDAFGTAHRAQASTHGVIRFAPVAAGGPLLMAELDALAKALDNPAKPLLAIVAGSKVSTKLELLSNLVNKVDQLIVGGGIANTFIAAAGHAVGKSLNEPDLIPTANQIVADAKARGAEIPLPTDVVVAKQFLPDAQASVKSLDAVDADDLILDIGPHTAQRYAELIASAGTVVWNGPVGVFEFESFSHGTETLARAIASSKAFSIAGGGDTLAAVDKYDIAQEVTYISTGGGAFLEFLEGKTLPAVAALQARGQ.

Substrate contacts are provided by residues 21–23, R36, 59–62, R113, and R146; these read DLN and HLGR. ATP-binding positions include K197, E319, and 345-348; that span reads GGDT.

This sequence belongs to the phosphoglycerate kinase family. Monomer.

Its subcellular location is the cytoplasm. It carries out the reaction (2R)-3-phosphoglycerate + ATP = (2R)-3-phospho-glyceroyl phosphate + ADP. The protein operates within carbohydrate degradation; glycolysis; pyruvate from D-glyceraldehyde 3-phosphate: step 2/5. In Xanthomonas euvesicatoria pv. vesicatoria (strain 85-10) (Xanthomonas campestris pv. vesicatoria), this protein is Phosphoglycerate kinase.